A 252-amino-acid polypeptide reads, in one-letter code: Phosphate import ATP-binding protein PstB (252 aa).

The ABC transporter domain occupies 6 to 247 (ITIEKLNLYY…PKDERTEKYI (242 aa)). 38–45 (GPSGCGKS) serves as a coordination point for ATP.

Belongs to the ABC transporter superfamily. Phosphate importer (TC 3.A.1.7) family. In terms of assembly, the complex is composed of two ATP-binding proteins (PstB), two transmembrane proteins (PstC and PstA) and a solute-binding protein (PstS).

The protein localises to the cell membrane. The catalysed reaction is phosphate(out) + ATP + H2O = ADP + 2 phosphate(in) + H(+). Part of the ABC transporter complex PstSACB involved in phosphate import. Responsible for energy coupling to the transport system. In Lactobacillus delbrueckii subsp. bulgaricus (strain ATCC 11842 / DSM 20081 / BCRC 10696 / JCM 1002 / NBRC 13953 / NCIMB 11778 / NCTC 12712 / WDCM 00102 / Lb 14), this protein is Phosphate import ATP-binding protein PstB.